The sequence spans 239 residues: Ribulose-1,5-bisphosphate 5-phosphatase (239 aa).

D8 acts as the Nucleophile in catalysis. Residues D8, D10, and D184 each coordinate Mg(2+). The Proton donor role is filled by D10. The segment at 205–239 (PSEESDATESADRAATERQADHSIDTLGELTDLVS) is disordered. Residues 214–228 (SADRAATERQADHSI) are compositionally biased toward basic and acidic residues.

This sequence belongs to the HAD-like hydrolase superfamily. Mg(2+) serves as cofactor. It depends on Mn(2+) as a cofactor. Co(2+) is required as a cofactor. The cofactor is Ni(2+).

It catalyses the reaction D-ribulose 1,5-bisphosphate + H2O = D-ribulose 1-phosphate + phosphate. Requires both monovalent and divalent ions for optimal activity. Optimal KCl concentration is higher than 2.5 M. Its function is as follows. Phosphatase involved in the non-carboxylating pentose bisphosphate pathway, a nucleoside degradation pathway present in some halophilic archaea. Catalyzes the dephosphorylation of ribulose 1,5-bisphosphate (RuBP) to ribulose 1-phosphate (Ru1P). Shows a strict substrate specificity toward RuBP. The sequence is that of Ribulose-1,5-bisphosphate 5-phosphatase from Halopiger xanaduensis (strain DSM 18323 / JCM 14033 / SH-6).